Consider the following 225-residue polypeptide: Mitochondrial inner membrane protease ATP23 (225 aa).

Histidine 124 lines the a divalent metal cation pocket. Glutamate 125 is a catalytic residue. Position 128 (histidine 128) interacts with a divalent metal cation.

This sequence belongs to the peptidase M76 family.

It is found in the mitochondrion inner membrane. In terms of biological role, has a dual role in the assembly of mitochondrial ATPase. Acts as a protease that removes N-terminal residues of mitochondrial ATPase CF(0) subunit 6 at the intermembrane space side. Also involved in the correct assembly of the membrane-embedded ATPase CF(0) particle, probably mediating association of subunit 6 with the subunit 9 ring. The protein is Mitochondrial inner membrane protease ATP23 (ATP23) of Candida glabrata (strain ATCC 2001 / BCRC 20586 / JCM 3761 / NBRC 0622 / NRRL Y-65 / CBS 138) (Yeast).